Here is a 41-residue protein sequence, read N- to C-terminus: Large ribosomal subunit protein bL36 (41 aa).

This sequence belongs to the bacterial ribosomal protein bL36 family.

In Chelativorans sp. (strain BNC1), this protein is Large ribosomal subunit protein bL36.